Reading from the N-terminus, the 591-residue chain is Aspartate--tRNA(Asp/Asn) ligase (591 aa).

Residue Glu-174 participates in L-aspartate binding. The interval Gln-198–Lys-201 is aspartate. An L-aspartate-binding site is contributed by Arg-220. ATP-binding positions include Arg-220 to Glu-222 and Gln-229. L-aspartate is bound at residue His-450. Glu-483 contacts ATP. Position 490 (Arg-490) interacts with L-aspartate. Gly-535–Arg-538 contributes to the ATP binding site.

It belongs to the class-II aminoacyl-tRNA synthetase family. Type 1 subfamily. In terms of assembly, homodimer.

The protein localises to the cytoplasm. It carries out the reaction tRNA(Asx) + L-aspartate + ATP = L-aspartyl-tRNA(Asx) + AMP + diphosphate. Aspartyl-tRNA synthetase with relaxed tRNA specificity since it is able to aspartylate not only its cognate tRNA(Asp) but also tRNA(Asn). Reaction proceeds in two steps: L-aspartate is first activated by ATP to form Asp-AMP and then transferred to the acceptor end of tRNA(Asp/Asn). The sequence is that of Aspartate--tRNA(Asp/Asn) ligase from Ectopseudomonas mendocina (strain ymp) (Pseudomonas mendocina).